The sequence spans 129 residues: Large ribosomal subunit protein bL12 (129 aa).

This sequence belongs to the bacterial ribosomal protein bL12 family. Homodimer. Part of the ribosomal stalk of the 50S ribosomal subunit. Forms a multimeric L10(L12)X complex, where L10 forms an elongated spine to which 2 to 4 L12 dimers bind in a sequential fashion. Binds GTP-bound translation factors.

Functionally, forms part of the ribosomal stalk which helps the ribosome interact with GTP-bound translation factors. Is thus essential for accurate translation. This is Large ribosomal subunit protein bL12 from Synechococcus sp. (strain CC9605).